The following is a 439-amino-acid chain: Probable non-inhibitory serpin-Z9 (439 aa).

Residues 12 to 44 are disordered; the sequence is RRPPFPAGDANHRRLSSAPAPKPEAPAEAMPPP. Pro residues predominate over residues 31-44; that stretch reads APKPEAPAEAMPPP. The tract at residues 389–413 is RCL; that stretch reads GIEETSVSMGLGKPLPAQHFKADHP.

This sequence belongs to the serpin family.

This chain is Probable non-inhibitory serpin-Z9, found in Oryza sativa subsp. japonica (Rice).